The sequence spans 288 residues: UTP--glucose-1-phosphate uridylyltransferase (288 aa).

Belongs to the UDPGP type 2 family.

It carries out the reaction alpha-D-glucose 1-phosphate + UTP + H(+) = UDP-alpha-D-glucose + diphosphate. It participates in glycolipid metabolism; diglucosyl-diacylglycerol biosynthesis. In terms of biological role, catalyzes the formation of UDP-glucose from glucose-1-phosphate and UTP. This is an intermediate step in the biosynthesis of diglucosyl-diacylglycerol (Glc2-DAG), i.e. a glycolipid found in the membrane, which is also used as a membrane anchor for lipoteichoic acid (LTA). In Staphylococcus haemolyticus (strain JCSC1435), this protein is UTP--glucose-1-phosphate uridylyltransferase (gtaB).